Here is a 452-residue protein sequence, read N- to C-terminus: MPAVLLVLYVNPPPSVCILTQKLSLGLYNQWWRVCRSVPPPWYVFFNKRSMSTFKLMMDGRLVFAMAIAILSVVLSCGTCEKAKRAVRGRQDRPKEFPPPRYNYTILTRYNATALASPFINDQVKNVDLRIVTATRPCEMIALIAKTNIDSILKELAAAQKTYSARLTWFKIMPTCATPIHDVSYMKCNPKLSFAMCDERSDILWQASLITMAAETDDELGLVLAAPAHSASGLYRRVIEIDGRRIYTDFSVTIPSERCPIAFEQNFGNPDRCKTPEQYSRGEVFTRRFLGEFNFPQGEHMTWLKFWFVYDGGNLPVQFYEAQAFARPVPPDNHPGFDSVESEITQNKTDPKPGQADPKPNQPFKWPSIKHLAPRLDEVDEVIEPVTKPPKTSKSNSTFVGISVGLGIAGLVLVGVILYVCLRRKKELKKSAQNGLTRLRSTFKDVKYTQLP.

An N-terminal signal peptide occupies residues 1–19 (MPAVLLVLYVNPPPSVCIL). The Virion surface segment spans residues 20–405 (TQKLSLGLYN…NSTFVGISVG (386 aa)). 2 N-linked (GlcNAc...) asparagine; by host glycosylation sites follow: Asn-103 and Asn-111. 3 disulfides stabilise this stretch: Cys-138–Cys-259, Cys-176–Cys-273, and Cys-188–Cys-197. Positions 331 to 365 (PDNHPGFDSVESEITQNKTDPKPGQADPKPNQPFK) are disordered. N-linked (GlcNAc...) asparagine; by host glycosylation is found at Asn-347 and Asn-396. A helical membrane pass occupies residues 406 to 422 (LGIAGLVLVGVILYVCL). Over 423–452 (RRKKELKKSAQNGLTRLRSTFKDVKYTQLP) the chain is Intravirion.

Belongs to the herpesviridae glycoprotein D family.

It localises to the virion membrane. Functionally, envelope glycoprotein that binds to host cell entry receptors, promoting the virus entry into host cells. May trigger fusion with host membrane, by recruiting the fusion machinery composed of gB and gH/gL. The protein is Envelope glycoprotein D (gD) of Equine herpesvirus 1 (strain Ab4p) (EHV-1).